A 76-amino-acid chain; its full sequence is Small ribosomal subunit protein bS16 (76 aa).

The protein belongs to the bacterial ribosomal protein bS16 family.

This Helicobacter acinonychis (strain Sheeba) protein is Small ribosomal subunit protein bS16.